The chain runs to 282 residues: Bis(5'-nucleosyl)-tetraphosphatase, symmetrical (282 aa).

It belongs to the Ap4A hydrolase family.

The enzyme catalyses P(1),P(4)-bis(5'-adenosyl) tetraphosphate + H2O = 2 ADP + 2 H(+). Hydrolyzes diadenosine 5',5'''-P1,P4-tetraphosphate to yield ADP. The chain is Bis(5'-nucleosyl)-tetraphosphatase, symmetrical from Burkholderia pseudomallei (strain 1106a).